The primary structure comprises 358 residues: Protein Wnt-8 (358 aa).

Residues 1 to 22 (MQNTTLFILATLLIFCPFFTAS) form the signal peptide. C55 and C66 are joined by a disulfide. N104 carries N-linked (GlcNAc...) asparagine glycosylation. Cystine bridges form between C105/C113, C115/C133, C181/C195, C183/C190, C260/C298, C276/C291, C295/C337, C313/C328, C315/C325, and C320/C321. A lipid anchor (O-palmitoleoyl serine) is attached at S187. N-linked (GlcNAc...) asparagine glycans are attached at residues N263 and N282.

This sequence belongs to the Wnt family. Homooligomer; disulfide-linked, leading to inactivation. Interacts with the long chain of cer1. Post-translationally, palmitoleoylation is required for efficient binding to frizzled receptors. Depalmitoleoylation leads to Wnt signaling pathway inhibition. Proteolytic processing by tiki1 and tiki2 promotes oxidation and formation of large disulfide-bond oligomers, leading to inactivation of wnt8.

Its subcellular location is the secreted. The protein localises to the extracellular space. It localises to the extracellular matrix. Functionally, ligand for members of the frizzled family of seven transmembrane receptors. Plays a role in ventral mesodermal patterning during embryogenesis. Mimics Nieuwkoop center activity. Causes dorsal mesodermal differentiation of animal cap ectoderm when coexpressed with noggin and nuclear, sequence-specific DNA-binding protein xBra. None of these molecules causes dorsal mesoderm formation when expressed alone. In Xenopus laevis (African clawed frog), this protein is Protein Wnt-8 (wnt8).